A 374-amino-acid chain; its full sequence is Methylthioribose-1-phosphate isomerase (374 aa).

An N-acetylserine modification is found at S2. Catalysis depends on D253, which acts as the Proton donor.

Belongs to the eIF-2B alpha/beta/delta subunits family. MtnA subfamily.

The protein resides in the cytoplasm. The protein localises to the nucleus. It catalyses the reaction 5-(methylsulfanyl)-alpha-D-ribose 1-phosphate = 5-(methylsulfanyl)-D-ribulose 1-phosphate. It participates in amino-acid biosynthesis; L-methionine biosynthesis via salvage pathway; L-methionine from S-methyl-5-thio-alpha-D-ribose 1-phosphate: step 1/6. Functionally, catalyzes the interconversion of methylthioribose-1-phosphate (MTR-1-P) into methylthioribulose-1-phosphate (MTRu-1-P). This chain is Methylthioribose-1-phosphate isomerase, found in Arabidopsis thaliana (Mouse-ear cress).